The chain runs to 250 residues: Peptidyl-tRNA hydrolase, mitochondrial (250 aa).

The transit peptide at 1–45 directs the protein to the mitochondrion; sequence MRLLSGASASRIPCPLLSLARARARCLPVPASATACRAASSSAAA. Tyr-68 contacts tRNA. His-73 functions as the Proton acceptor in the catalytic mechanism. TRNA-binding residues include Phe-118, Asn-120, and Asn-166.

It belongs to the PTH family.

The protein localises to the mitochondrion. The enzyme catalyses an N-acyl-L-alpha-aminoacyl-tRNA + H2O = an N-acyl-L-amino acid + a tRNA + H(+). The natural substrate for this enzyme may be peptidyl-tRNAs which drop off the ribosome during protein synthesis. The protein is Peptidyl-tRNA hydrolase, mitochondrial of Oryza sativa subsp. japonica (Rice).